A 493-amino-acid polypeptide reads, in one-letter code: Ketol-acid reductoisomerase (NADP(+)) (493 aa).

The KARI N-terminal Rossmann domain maps to 14–208 (LDQLGRCRFM…GGHRAGVLES (195 aa)). NADP(+)-binding positions include 45 to 48 (CGAQ), Arg-68, Arg-76, Ser-78, and 108 to 110 (DKQ). His-132 is a catalytic residue. Residue Gly-158 coordinates NADP(+). KARI C-terminal knotted domains are found at residues 209–345 (SFVA…APKG) and 346–486 (ENIK…MTDM). Mg(2+)-binding residues include Asp-217, Glu-221, Glu-390, and Glu-394. Ser-415 is a substrate binding site.

This sequence belongs to the ketol-acid reductoisomerase family. Mg(2+) is required as a cofactor.

It carries out the reaction (2R)-2,3-dihydroxy-3-methylbutanoate + NADP(+) = (2S)-2-acetolactate + NADPH + H(+). It catalyses the reaction (2R,3R)-2,3-dihydroxy-3-methylpentanoate + NADP(+) = (S)-2-ethyl-2-hydroxy-3-oxobutanoate + NADPH + H(+). It participates in amino-acid biosynthesis; L-isoleucine biosynthesis; L-isoleucine from 2-oxobutanoate: step 2/4. Its pathway is amino-acid biosynthesis; L-valine biosynthesis; L-valine from pyruvate: step 2/4. Functionally, involved in the biosynthesis of branched-chain amino acids (BCAA). Catalyzes an alkyl-migration followed by a ketol-acid reduction of (S)-2-acetolactate (S2AL) to yield (R)-2,3-dihydroxy-isovalerate. In the isomerase reaction, S2AL is rearranged via a Mg-dependent methyl migration to produce 3-hydroxy-3-methyl-2-ketobutyrate (HMKB). In the reductase reaction, this 2-ketoacid undergoes a metal-dependent reduction by NADPH to yield (R)-2,3-dihydroxy-isovalerate. The chain is Ketol-acid reductoisomerase (NADP(+)) from Histophilus somni (strain 2336) (Haemophilus somnus).